The following is a 218-amino-acid chain: Small ribosomal subunit protein uS3c (218 aa).

Residues valine 47–serine 118 enclose the KH type-2 domain.

The protein belongs to the universal ribosomal protein uS3 family. In terms of assembly, part of the 30S ribosomal subunit.

It is found in the plastid. Its subcellular location is the chloroplast. The sequence is that of Small ribosomal subunit protein uS3c (rps3) from Arabis hirsuta (Hairy rock-cress).